The chain runs to 863 residues: Facilitated trehalose transporter Tret1 (863 aa).

Residues 1 to 208 are disordered; that stretch reads MSGRDNRGAG…RIGFQQQKAT (208 aa). At 1-398 the chain is on the cytoplasmic side; it reads MSGRDNRGAG…VYRPTTNPIY (398 aa). Basic and acidic residues predominate over residues 28–46; that stretch reads KLKEKLTRAGEELGYHRVE. A compositionally biased stretch (polar residues) spans 47 to 59; the sequence is SNLSASNTGTSLD. Positions 72–85 are enriched in low complexity; that stretch reads AAPQRHPQQQFPHL. 2 stretches are compositionally biased toward polar residues: residues 114 to 129 and 177 to 187; these read PPQQIQQQRSALRSSG and KPQQQGNNKAA. Residues Ser254, Ser255, and Ser256 each carry the phosphoserine modification. The segment at 286-307 is disordered; that stretch reads VLQGSSTDSDEEGDDAEHKRLI. A phosphoserine mark is found at Ser326 and Ser328. Residues 332-354 are disordered; the sequence is FLTSRQNFQQQRSISTDSRKSRR. The segment covering 336 to 347 has biased composition (polar residues); it reads RQNFQQQRSIST. A helical membrane pass occupies residues 399–419; it reads IWTQVLAALSVSLGSLVVGFA. Residues 420-446 lie on the Extracellular side of the membrane; it reads SAYTSPALVSMTNTNLTSFVVTPQAAS. A glycan (N-linked (GlcNAc...) asparagine) is linked at Asn434. A helical transmembrane segment spans residues 447–467; that stretch reads WVGGIMPLAGLAGGIAGGPFI. Over 468–479 the chain is Cytoplasmic; the sequence is EYLGRRNTILAT. Residues 480–500 traverse the membrane as a helical segment; it reads AVPFIISWLLIACAVNVVMVL. Topologically, residues 501 to 503 are extracellular; the sequence is CGR. A helical membrane pass occupies residues 504-524; the sequence is FLAGFCVGIASLSLPVYLGET. The Cytoplasmic segment spans residues 525–530; sequence VQPEVR. A helical transmembrane segment spans residues 531 to 551; sequence GTLGLLPTAFGNIGILLCFVA. Topologically, residues 552-558 are extracellular; the sequence is GTYMDWS. A helical membrane pass occupies residues 559 to 579; sequence MLAFLGGTLPVPFLILMFLIP. The Cytoplasmic segment spans residues 580-642; it reads ETPRWYVSRG…ELLKRSNLKP (63 aa). Residues 643-663 form a helical membrane-spanning segment; it reads LSISLGLMFFQQLSGINAVIF. Over 664 to 679 the chain is Extracellular; sequence YTVQIFQDAGSTIDGN. Residues 680-700 form a helical membrane-spanning segment; the sequence is VCTIIVGVVNFMATFIATVLI. Over 701–706 the chain is Cytoplasmic; sequence DRAGRK. The chain crosses the membrane as a helical span at residues 707–727; the sequence is ILLYVSNVAMILTLFVLGGFF. Residues 728-746 lie on the Extracellular side of the membrane; sequence YCKSTGMDTSNVGWLPLSC. A helical transmembrane segment spans residues 747-767; sequence FVVYILGFSLGFGPIPWLMMG. Topologically, residues 768–773 are cytoplasmic; it reads EILPAK. Residues 774–794 form a helical membrane-spanning segment; the sequence is IRGSAASVATAFNWSCTFVVT. Over 795–807 the chain is Extracellular; it reads KSFQDMIDVMGAH. The chain crosses the membrane as a helical span at residues 808–828; the sequence is GAFWMFGAICFVGLFFVIFYV. Residues 829 to 863 are Cytoplasmic-facing; the sequence is PETQGKTLEDIERKMMGRVRRMSSVANIKPLSFNM. Ser851 and Ser852 each carry phosphoserine.

This sequence belongs to the major facilitator superfamily. Sugar transporter (TC 2.A.1.1) family. Trehalose transporter subfamily.

The protein localises to the cell membrane. In terms of biological role, low-capacity facilitative transporter for trehalose. Does not transport maltose, sucrose or lactose. Mediates the bidirectional transfer of trehalose. Responsible for the transport of trehalose synthesized in the fat body and the incorporation of trehalose into other tissues that require a carbon source, thereby regulating trehalose levels in the hemolymph. In Drosophila mojavensis (Fruit fly), this protein is Facilitated trehalose transporter Tret1.